Reading from the N-terminus, the 201-residue chain is Ribonuclease HII (201 aa).

In terms of domain architecture, RNase H type-2 spans Asp12–Gln201. Positions 18, 19, and 110 each coordinate a divalent metal cation.

It belongs to the RNase HII family. Requires Mn(2+) as cofactor. Mg(2+) serves as cofactor.

It localises to the cytoplasm. It carries out the reaction Endonucleolytic cleavage to 5'-phosphomonoester.. In terms of biological role, endonuclease that specifically degrades the RNA of RNA-DNA hybrids. The protein is Ribonuclease HII of Pseudomonas aeruginosa (strain UCBPP-PA14).